The primary structure comprises 324 residues: Homeobox protein Nkx-2.5 (324 aa).

The segment at residues 138-197 (RRKPRVLFSQAQVYELERRFKQQRYLSAPERDQLASVLKLTSTQVKIWFQNRRYKCKRQR) is a DNA-binding region (homeobox).

Belongs to the NK-2 homeobox family. As to quaternary structure, homodimer (via the homeobox); binds DNA as homodimer. Interacts (via the homeobox) with TBX5 (via the T-box); this complex binds DNA. Interacts with HIPK1 and HIPK2, but not HIPK3. Interacts with the C-terminal zinc finger of GATA4 through its homeobox domain. Also interacts with JARID2 which represses its ability to activate transcription of ANF. Interacts with FBLIM1. Interacts with TBX18. Interacts with histone methyltransferase NSD2 (via HMG box). Interacts with NEDD9. Interacts with TBX1. Expressed only in the heart.

The protein localises to the nucleus. Transcription factor required for the development of the heart and the spleen. During heart development, acts as a transcriptional activator of NPPA/ANF in cooperation with GATA4. May cooperate with TBX2 to negatively modulate expression of NPPA/ANF in the atrioventricular canal. Binds to the core DNA motif of NPPA promoter. Together with PBX1, required for spleen development through a mechanism that involves CDKN2B repression. Positively regulates transcription of genes such as COL3A1 and MMP2, resulting in increased pulmonary endothelial fibrosis in response to hypoxia. In Homo sapiens (Human), this protein is Homeobox protein Nkx-2.5 (NKX2-5).